Consider the following 268-residue polypeptide: 4-hydroxy-tetrahydrodipicolinate reductase (268 aa).

Residues 8–13 (GAAGRM) and Glu-34 each bind NAD(+). Arg-35 contributes to the NADP(+) binding site. NAD(+) contacts are provided by residues 96-98 (GST) and 120-123 (SPNM). The active-site Proton donor/acceptor is the His-153. His-154 provides a ligand contact to (S)-2,3,4,5-tetrahydrodipicolinate. The active-site Proton donor is Lys-157. 163–164 (GT) is a binding site for (S)-2,3,4,5-tetrahydrodipicolinate.

The protein belongs to the DapB family.

The protein resides in the cytoplasm. The enzyme catalyses (S)-2,3,4,5-tetrahydrodipicolinate + NAD(+) + H2O = (2S,4S)-4-hydroxy-2,3,4,5-tetrahydrodipicolinate + NADH + H(+). The catalysed reaction is (S)-2,3,4,5-tetrahydrodipicolinate + NADP(+) + H2O = (2S,4S)-4-hydroxy-2,3,4,5-tetrahydrodipicolinate + NADPH + H(+). Its pathway is amino-acid biosynthesis; L-lysine biosynthesis via DAP pathway; (S)-tetrahydrodipicolinate from L-aspartate: step 4/4. In terms of biological role, catalyzes the conversion of 4-hydroxy-tetrahydrodipicolinate (HTPA) to tetrahydrodipicolinate. The polypeptide is 4-hydroxy-tetrahydrodipicolinate reductase (Anaeromyxobacter sp. (strain Fw109-5)).